The primary structure comprises 645 residues: MNRQRLLKIWCLKKLGETHRCYSSAGDPTKLINFSEFTPEKIRNFGIVAHVDHGKSTLADRLLELCGAVPPGQQQMLDKLQVERERGITVKAQTAALKYQGYLLNLIDTPGHVDFSAEVSRSLAVCDGILLLVAANQGVQAQTIANFWLAFEKNIQIIPVINKIDLPGADIKSVETQLKNLFEFNSEECLHISAKSGLNVEKVLDAIVERVPAPTANVEAPFRAMIFDSYFDHFRGAIAHIVVKEGSVKKGDKIRSYQNDKSYDVSEVGVMRPEMVKCTEVRAGQVGYLVCNMRTVKEAVVGETLFAAETPKESVQSFAEIKGVKATVYAGLFPVETADYESLKQAVERLCLNDPSVTVTPDASKALGLGWRIGFLGVLHMEVFGARLSQEYDASVILCQPSVEYRAKIKDNENIRKKRYDGMEEVRILDPSKFPEESDVDSFLEPMVKVRMIVPNEMMGTVNGLCSECRGERGEISSIDTSRLMILWRLPLAEVAVDFFERLKKLTSGYASFDYEPDGWQETRLVKLTILINGKEVSEFSQILPAAMARDRAKTLVQRLKREIPRQQFEVTIKACIGSSTKALSQIVIQPMKRDFSQLLKGNFGGGGMERLNKKLSHQKKGKERMKMVGNIQIPKEAFLNVLKN.

The tr-type G domain occupies 40–215 (EKIRNFGIVA…AIVERVPAPT (176 aa)). GTP contacts are provided by residues 49–56 (AHVDHGKS), 108–112 (DTPGH), and 162–165 (NKID).

This sequence belongs to the TRAFAC class translation factor GTPase superfamily. Classic translation factor GTPase family. LepA subfamily.

Its subcellular location is the mitochondrion inner membrane. The catalysed reaction is GTP + H2O = GDP + phosphate + H(+). Promotes mitochondrial protein synthesis. May act as a fidelity factor of the translation reaction, by catalyzing a one-codon backward translocation of tRNAs on improperly translocated ribosomes. Binds to mitochondrial ribosomes in a GTP-dependent manner. In Caenorhabditis briggsae, this protein is Translation factor GUF1 homolog, mitochondrial.